Reading from the N-terminus, the 199-residue chain is Recombination protein RecR (199 aa).

The segment at Cys57–Cys72 adopts a C4-type zinc-finger fold. Residues Ser80 to Ala176 enclose the Toprim domain.

It belongs to the RecR family.

May play a role in DNA repair. It seems to be involved in an RecBC-independent recombinational process of DNA repair. It may act with RecF and RecO. The protein is Recombination protein RecR of Ligilactobacillus salivarius (strain UCC118) (Lactobacillus salivarius).